A 462-amino-acid chain; its full sequence is Major capsid protein (462 aa).

The protein belongs to the NCLDV major capsid protein family. As to quaternary structure, homotrimer.

The protein localises to the virion. Its function is as follows. Major capsid protein that self assembles to form an icosahedral capsid. Represents around 50% of the total virion protein mass. The polypeptide is Major capsid protein (MCP) (Costelytra zealandica (CzIV)).